The chain runs to 360 residues: Serine/threonine transporter SstT (360 aa).

The next 9 helical transmembrane spans lie at isoleucine 17–isoleucine 37, phenylalanine 40–valine 60, valine 78–tyrosine 98, alanine 138–phenylalanine 158, valine 179–isoleucine 199, leucine 212–isoleucine 232, methionine 295–isoleucine 315, serine 316–alanine 336, and valine 339–valine 359.

The protein belongs to the dicarboxylate/amino acid:cation symporter (DAACS) (TC 2.A.23) family.

The protein resides in the cell membrane. The enzyme catalyses L-serine(in) + Na(+)(in) = L-serine(out) + Na(+)(out). It catalyses the reaction L-threonine(in) + Na(+)(in) = L-threonine(out) + Na(+)(out). In terms of biological role, involved in the import of serine and threonine into the cell, with the concomitant import of sodium (symport system). This Streptococcus suis (strain 05ZYH33) protein is Serine/threonine transporter SstT.